A 491-amino-acid chain; its full sequence is UDP-N-acetylmuramate--L-alanine ligase (491 aa).

Gly-126 to Thr-132 contacts ATP.

It belongs to the MurCDEF family.

Its subcellular location is the cytoplasm. The enzyme catalyses UDP-N-acetyl-alpha-D-muramate + L-alanine + ATP = UDP-N-acetyl-alpha-D-muramoyl-L-alanine + ADP + phosphate + H(+). It participates in cell wall biogenesis; peptidoglycan biosynthesis. In terms of biological role, cell wall formation. The polypeptide is UDP-N-acetylmuramate--L-alanine ligase (Salmonella paratyphi C (strain RKS4594)).